A 229-amino-acid polypeptide reads, in one-letter code: 7-cyano-7-deazaguanine synthase (229 aa).

Position 15 to 25 (15 to 25 (LSGGLDSATVV)) interacts with ATP. Residues C194, C204, C207, and C210 each coordinate Zn(2+).

It belongs to the QueC family. Zn(2+) is required as a cofactor.

The enzyme catalyses 7-carboxy-7-deazaguanine + NH4(+) + ATP = 7-cyano-7-deazaguanine + ADP + phosphate + H2O + H(+). It functions in the pathway purine metabolism; 7-cyano-7-deazaguanine biosynthesis. Catalyzes the ATP-dependent conversion of 7-carboxy-7-deazaguanine (CDG) to 7-cyano-7-deazaguanine (preQ(0)). This Pseudomonas syringae pv. syringae (strain B728a) protein is 7-cyano-7-deazaguanine synthase.